The primary structure comprises 647 residues: Pumilio homolog 3 (647 aa).

The span at 1-10 (MEVKGKKKFT) shows a compositional bias: basic residues. Positions 1–123 (MEVKGKKKFT…KKKKELKQSR (123 aa)) are disordered. Lys33 carries the N6-acetyllysine modification. Residues 59 to 68 (PGKKGVKQFK) are compositionally biased toward basic residues. The segment covering 102–123 (SGAKKPKWDDFKKKKKELKQSR) has biased composition (basic and acidic residues). The Nuclear localization signal signature appears at 105–117 (KKPKWDDFKKKKK). One can recognise a PUM-HD domain in the interval 142–509 (ESLRRKDCDK…VVLDKSACVL (368 aa)). 11 Pumilio repeats span residues 176–211 (HDST…LSKA), 212–247 (KYSR…MLRH), 248–276 (SEAS…ELYG), 288–324 (PTLD…VIKH), 325–360 (SLVH…LAHT), 361–396 (HDGA…VANG), 397–434 (QYSH…IVND), 435–503 (KYGR…VVLD), 504–550 (KSAC…VAEH), 551–595 (PAGH…WASI), and 596–635 (NRGA…KSSS).

Interacts with PARP1 (via catalytic domain). As to expression, in the adult eye, expressed primarily in retinal ganglion cells and, to a lesser extent, in the pigmented cells.

It is found in the nucleus. The protein localises to the nucleolus. It localises to the nucleoplasm. The protein resides in the chromosome. In terms of biological role, inhibits the poly(ADP-ribosyl)ation activity of PARP1 and the degradation of PARP1 by CASP3 following genotoxic stress. Binds to double-stranded RNA or DNA without sequence specificity. Involved in development of the eye and of primordial germ cells. The chain is Pumilio homolog 3 from Mus musculus (Mouse).